Here is a 158-residue protein sequence, read N- to C-terminus: Cyclic pyranopterin monophosphate synthase (158 aa).

Substrate contacts are provided by residues 73 to 75 (LCH) and 110 to 111 (ME). The active site involves Asp-125.

Belongs to the MoaC family. As to quaternary structure, homohexamer; trimer of dimers.

The enzyme catalyses (8S)-3',8-cyclo-7,8-dihydroguanosine 5'-triphosphate = cyclic pyranopterin phosphate + diphosphate. Its pathway is cofactor biosynthesis; molybdopterin biosynthesis. Catalyzes the conversion of (8S)-3',8-cyclo-7,8-dihydroguanosine 5'-triphosphate to cyclic pyranopterin monophosphate (cPMP). This is Cyclic pyranopterin monophosphate synthase from Ectopseudomonas mendocina (strain ymp) (Pseudomonas mendocina).